We begin with the raw amino-acid sequence, 78 residues long: Acyl carrier protein (78 aa).

Residues 4 to 78 (AEIKDKVYDI…QQAIDYIVKK (75 aa)) enclose the Carrier domain. The residue at position 39 (Ser39) is an O-(pantetheine 4'-phosphoryl)serine.

It belongs to the acyl carrier protein (ACP) family. 4'-phosphopantetheine is transferred from CoA to a specific serine of apo-ACP by AcpS. This modification is essential for activity because fatty acids are bound in thioester linkage to the sulfhydryl of the prosthetic group.

It localises to the cytoplasm. Its pathway is lipid metabolism; fatty acid biosynthesis. Functionally, carrier of the growing fatty acid chain in fatty acid biosynthesis. The polypeptide is Acyl carrier protein (Chlorobium phaeovibrioides (strain DSM 265 / 1930) (Prosthecochloris vibrioformis (strain DSM 265))).